Here is a 727-residue protein sequence, read N- to C-terminus: Probable acyl-activating enzyme 18, peroxisomal (727 aa).

Residues 725–727 (SRI) carry the Microbody targeting signal motif.

Belongs to the ATP-dependent AMP-binding enzyme family. Expressed in flowers.

It localises to the peroxisome. May be involved in the peroxisomal activation of 2,4-dichlorophenoxybutyric acid (2,4-DB), a precursor of active auxins that inhibit root growth. The chain is Probable acyl-activating enzyme 18, peroxisomal (AAE18) from Arabidopsis thaliana (Mouse-ear cress).